The primary structure comprises 277 residues: Phosphate import ATP-binding protein PstB (277 aa).

The region spanning 31 to 272 is the ABC transporter domain; that stretch reads LEVPGLNLFY…PAKKQTEDYI (242 aa). 63–70 lines the ATP pocket; it reads GPSGCGKS.

This sequence belongs to the ABC transporter superfamily. Phosphate importer (TC 3.A.1.7) family. In terms of assembly, the complex is composed of two ATP-binding proteins (PstB), two transmembrane proteins (PstC and PstA) (Potential). PstS is missing in this species.

It localises to the cell inner membrane. The catalysed reaction is phosphate(out) + ATP + H2O = ADP + 2 phosphate(in) + H(+). Functionally, part of the ABC transporter complex PstSACB involved in phosphate import. Responsible for energy coupling to the transport system. This Pseudomonas aeruginosa (strain ATCC 15692 / DSM 22644 / CIP 104116 / JCM 14847 / LMG 12228 / 1C / PRS 101 / PAO1) protein is Phosphate import ATP-binding protein PstB.